A 302-amino-acid chain; its full sequence is MSQTVSQLTRQPELEILEIKNDSIIFILSNTDISVANALRRVMIAEVPTMCIDLVEFESNNSVLCDEFIAHRLGLIPLVSDNIDKFCYTRDCSCSDRCDQCSVELRLNVKCTENRPRDVTSSDLLSQNSAVIPVSSQVTSSNSEQEIPIVKLRRGQEIKLRAIAKKGVGKEHAKWSPSCVATYQFQPIIVLNQNRIDELTDQQKEEWVGSCPTKVYSYSPHQSTQQVTIEDPLRCVYCLECKKKAESFGKPDLVHLEQKQDKFIFTVESSGALKPEDIVLYAIQIIKRKLTDIQGQMAEGML.

Belongs to the archaeal Rpo3/eukaryotic RPB3 RNA polymerase subunit family. In terms of assembly, component of the RNA polymerase II (Pol II) complex consisting of 12 subunits.

Its subcellular location is the nucleus. In terms of biological role, DNA-dependent RNA polymerase catalyzes the transcription of DNA into RNA using the four ribonucleoside triphosphates as substrates. Component of RNA polymerase II which synthesizes mRNA precursors and many functional non-coding RNAs. Pol II is the central component of the basal RNA polymerase II transcription machinery. It is composed of mobile elements that move relative to each other. Rpb3 is part of the core element with the central large cleft and the clamp element that moves to open and close the cleft. This is DNA-directed RNA polymerase II subunit rpb3 (polr2c) from Dictyostelium discoideum (Social amoeba).